The primary structure comprises 726 residues: WD repeat and coiled-coil-containing protein (726 aa).

2 WD repeats span residues 55-98 (GQFE…LDKN) and 154-194 (KSSG…LNAC). A disordered region spans residues 503 to 571 (SYDGDQSPTS…SSPPNFIKHG (69 aa)). Polar residues predominate over residues 506–515 (GDQSPTSSAN). Residues 517–535 (FDDKRSKLRVESLDTEPKN) show a composition bias toward basic and acidic residues. Polar residues predominate over residues 550 to 565 (SRPTSPKSECQKSSPP). Residues 581 to 609 (SISRNVERLCCNFAHLQQHLSELTDITRN) adopt a coiled-coil conformation.

This is WD repeat and coiled-coil-containing protein (wdcp) from Xenopus tropicalis (Western clawed frog).